The sequence spans 258 residues: Phosphate import ATP-binding protein PstB (258 aa).

An ABC transporter domain is found at 12 to 253 (LEVKNLNFYY…PARKETEDYI (242 aa)). 44 to 51 (GPSGCGKS) provides a ligand contact to ATP.

Belongs to the ABC transporter superfamily. Phosphate importer (TC 3.A.1.7) family. In terms of assembly, the complex is composed of two ATP-binding proteins (PstB), two transmembrane proteins (PstC and PstA) and a solute-binding protein (PstS).

It localises to the cell inner membrane. It catalyses the reaction phosphate(out) + ATP + H2O = ADP + 2 phosphate(in) + H(+). In terms of biological role, part of the ABC transporter complex PstSACB involved in phosphate import. Responsible for energy coupling to the transport system. The sequence is that of Phosphate import ATP-binding protein PstB from Bordetella parapertussis (strain 12822 / ATCC BAA-587 / NCTC 13253).